We begin with the raw amino-acid sequence, 299 residues long: Recombination-associated protein RdgC (299 aa).

This sequence belongs to the RdgC family.

It localises to the cytoplasm. Its subcellular location is the nucleoid. May be involved in recombination. In Cupriavidus pinatubonensis (strain JMP 134 / LMG 1197) (Cupriavidus necator (strain JMP 134)), this protein is Recombination-associated protein RdgC.